The primary structure comprises 404 residues: Putative Peroxidase 48 (404 aa).

A signal peptide spans 1–18 (MRFLGDYKFALLTCSVIA). Disulfide bonds link Cys77–Cys156, Cys110–Cys115, Cys162–Cys397, and Cys241–Cys273. His108 functions as the Proton acceptor in the catalytic mechanism. Residues Asp109, Ile112, Gly114, Asp116, and Ser118 each coordinate Ca(2+). Asn136 carries N-linked (GlcNAc...) asparagine glycosylation. A substrate-binding site is contributed by Pro204. His234 provides a ligand contact to heme b. Ser235 serves as a coordination point for Ca(2+). N-linked (GlcNAc...) asparagine glycosylation occurs at Asn250. Residues 276–307 (SVSTSSPSAPPDIGLPPSLPASDSENSYGMSS) form a disordered region. A compositionally biased stretch (pro residues) spans 283 to 294 (SAPPDIGLPPSL). Asp287 provides a ligand contact to Ca(2+). Residues 296–307 (ASDSENSYGMSS) are compositionally biased toward polar residues.

Belongs to the peroxidase family. Classical plant (class III) peroxidase subfamily. The cofactor is heme b. Ca(2+) serves as cofactor.

Its subcellular location is the secreted. It carries out the reaction 2 a phenolic donor + H2O2 = 2 a phenolic radical donor + 2 H2O. Its function is as follows. Removal of H(2)O(2), oxidation of toxic reductants, biosynthesis and degradation of lignin, suberization, auxin catabolism, response to environmental stresses such as wounding, pathogen attack and oxidative stress. These functions might be dependent on each isozyme/isoform in each plant tissue. In Arabidopsis thaliana (Mouse-ear cress), this protein is Putative Peroxidase 48 (PER48).